Reading from the N-terminus, the 296-residue chain is Phosphatidylglycerol--prolipoprotein diacylglyceryl transferase (296 aa).

4 consecutive transmembrane segments (helical) span residues 10–30 (IAFS…LAAF), 57–77 (LLFY…MLFY), 92–112 (VWEG…ACWL), and 119–139 (LHFF…LGFG). Arg140 is an a 1,2-diacyl-sn-glycero-3-phospho-(1'-sn-glycerol) binding site. The next 3 membrane-spanning stretches (helical) occupy residues 194–214 (QLYE…TFSM), 220–240 (YALS…VEFV), and 254–274 (WLTM…ALLA).

The protein belongs to the Lgt family.

The protein localises to the cell inner membrane. The enzyme catalyses L-cysteinyl-[prolipoprotein] + a 1,2-diacyl-sn-glycero-3-phospho-(1'-sn-glycerol) = an S-1,2-diacyl-sn-glyceryl-L-cysteinyl-[prolipoprotein] + sn-glycerol 1-phosphate + H(+). It participates in protein modification; lipoprotein biosynthesis (diacylglyceryl transfer). Catalyzes the transfer of the diacylglyceryl group from phosphatidylglycerol to the sulfhydryl group of the N-terminal cysteine of a prolipoprotein, the first step in the formation of mature lipoproteins. This Xanthomonas oryzae pv. oryzae (strain MAFF 311018) protein is Phosphatidylglycerol--prolipoprotein diacylglyceryl transferase.